The sequence spans 475 residues: Beta-amyrin 28-monooxygenase (475 aa).

Residues 2 to 22 traverse the membrane as a helical segment; the sequence is YLTILFLFVSSILLSLMFLLR. Cys422 provides a ligand contact to heme.

The protein belongs to the cytochrome P450 family. Heme serves as cofactor.

It localises to the membrane. The catalysed reaction is beta-amyrin + 3 reduced [NADPH--hemoprotein reductase] + 3 O2 = oleanolate + 3 oxidized [NADPH--hemoprotein reductase] + 4 H2O + 4 H(+). Its function is as follows. Catalyzes the oxidation of the methyl group to a carboxyl group at the C-28 position of beta-amyrin to form oleanolate. The protein is Beta-amyrin 28-monooxygenase of Barbarea vulgaris (Yellow rocket).